The primary structure comprises 275 residues: Large ribosomal subunit protein uL2 (275 aa).

Disordered regions lie at residues Thr-38–Lys-59 and Val-223–Lys-275. The segment covering Thr-50–Lys-59 has biased composition (basic residues). Over residues Asp-229 to Glu-244 the composition is skewed to basic and acidic residues.

It belongs to the universal ribosomal protein uL2 family. As to quaternary structure, part of the 50S ribosomal subunit. Forms a bridge to the 30S subunit in the 70S ribosome.

Functionally, one of the primary rRNA binding proteins. Required for association of the 30S and 50S subunits to form the 70S ribosome, for tRNA binding and peptide bond formation. It has been suggested to have peptidyltransferase activity; this is somewhat controversial. Makes several contacts with the 16S rRNA in the 70S ribosome. This Bordetella bronchiseptica (strain ATCC BAA-588 / NCTC 13252 / RB50) (Alcaligenes bronchisepticus) protein is Large ribosomal subunit protein uL2.